A 1158-amino-acid polypeptide reads, in one-letter code: ATP-dependent helicase/deoxyribonuclease subunit B (1158 aa).

It belongs to the helicase family. AddB/RexB type 2 subfamily. Heterodimer of AddA and RexB. Mg(2+) serves as cofactor.

Its function is as follows. The heterodimer acts as both an ATP-dependent DNA helicase and an ATP-dependent, dual-direction single-stranded exonuclease. Recognizes the chi site generating a DNA molecule suitable for the initiation of homologous recombination. This subunit has 5' -&gt; 3' nuclease activity but not helicase activity. The protein is ATP-dependent helicase/deoxyribonuclease subunit B of Lactobacillus gasseri (strain ATCC 33323 / DSM 20243 / BCRC 14619 / CIP 102991 / JCM 1131 / KCTC 3163 / NCIMB 11718 / NCTC 13722 / AM63).